Here is a 617-residue protein sequence, read N- to C-terminus: Secretogranin-2 (617 aa).

A signal peptide spans 1 to 27 (MAEAKTHWLGAALSLIPLIFLISGAEA). A propeptide spanning residues 28-30 (ASF) is cleaved from the precursor. Positions 123-147 (NEPQSVPKENKPHALNSEKNFPIDM) are disordered. A Sulfotyrosine modification is found at Tyr-151. Residues Ser-174, Ser-268, Ser-432, Ser-532, Ser-555, and Ser-556 each carry the phosphoserine modification. Residues 552–583 (NQGSSQETDKLAPVSKRFPVGPPKNDDTPNRQ) form a disordered region.

The protein belongs to the chromogranin/secretogranin protein family. In terms of assembly, interacts with Secretogranin III/SCG3.

It localises to the secreted. Its function is as follows. Neuroendocrine protein of the granin family that regulates the biogenesis of secretory granules. This chain is Secretogranin-2 (SCG2), found in Macaca fascicularis (Crab-eating macaque).